The sequence spans 275 residues: Bis(5'-nucleosyl)-tetraphosphatase, symmetrical (275 aa).

This sequence belongs to the Ap4A hydrolase family.

It carries out the reaction P(1),P(4)-bis(5'-adenosyl) tetraphosphate + H2O = 2 ADP + 2 H(+). Hydrolyzes diadenosine 5',5'''-P1,P4-tetraphosphate to yield ADP. In Marinomonas sp. (strain MWYL1), this protein is Bis(5'-nucleosyl)-tetraphosphatase, symmetrical.